The following is a 497-amino-acid chain: MEMILITLCLTTLLALLLKSILKRTATKNFNLPPSPWRLPVIGNLHQLSLHTHRSLRSLSLRYGPLMLLHFGRTPVLIVSSADVAHDVMKTHDLVCANRPKTKVVDKILSGGRDVAFAPYGEYWRQMKSICIQNLLNNKMVRSYEKIREEEIKRMIEKLEKASCSSSPSPVNLSQILMTLTNDIICRVALGRKYSGKKDGIDVENIVRTFAALLGEFPVGEYIPSLSWIDRIRGLDHKMEVVDKRFDEFLERVVKEHEEADKETRSDLVDKLLTIQSDKTGQFELEKSALKLIIWDMFLAGTATTLSFLEWAMTELMRNPKVMKKLQEEIRSSSPQDLFVTEKEAEKMNYLQAVIKEALRLRPPAPLLVPRVLSEDVKLKGYNIPAGTQVIVNAWAIQRDTTTWGTDAEEFKPERHLDTNLDFQGQDFKFIPFGSGKRICPGIGFTSALIGVTLANIVKRFNWRMDVEPQRVQHDLTEATGLVVFRKFPLIAIPSSA.

A helical transmembrane segment spans residues methionine 3–lysine 23. Cysteine 440 serves as a coordination point for heme.

It belongs to the cytochrome P450 family. Heme is required as a cofactor.

It localises to the membrane. This is Cytochrome P450 71A20 (CYP71A20) from Arabidopsis thaliana (Mouse-ear cress).